A 227-amino-acid chain; its full sequence is LysM and putative peptidoglycan-binding domain-containing protein 1 (227 aa).

Residues 1–11 (MASPSRQPPPG) are compositionally biased toward pro residues. Residues 1 to 22 (MASPSRQPPPGGSGLLQGSRAR) form a disordered region. A phosphoserine mark is found at S23 and S33. The LysM domain maps to 40-84 (LEHQLEPGDTLAGLALKYGVTMEQIKRANRLYTNDSIFLKKTLYI). The tract at residues 97–150 (LDSEEEKDGEEKVHPSNSEVWPHSTERKKQETGAGRANGEVLPTPGQETPTPIH) is disordered. Phosphoserine occurs at positions 99, 166, 194, and 212.

The protein is LysM and putative peptidoglycan-binding domain-containing protein 1 (LYSMD1) of Homo sapiens (Human).